The primary structure comprises 589 residues: Kelch-like protein diablo (589 aa).

A disordered region spans residues 1-22 (MGDVLISDRPPSPARLSHTSEK). In terms of domain architecture, BTB spans 41–108 (CDVVINVSGR…CYTSHIVVEE (68 aa)). Positions 143–245 (CLGIRAFADT…SPKFLVGTVG (103 aa)) constitute a BACK domain. Kelch repeat units follow at residues 292–338 (VLFA…VLND), 340–386 (LYAV…VLDG), 387–433 (FLYA…VLGG), 435–480 (LYAI…VFNN), 482–527 (IYAV…VVNG), and 528–574 (QLYA…VMRA).

It functions in the pathway protein modification; protein ubiquitination. In terms of biological role, probable substrate-specific adapter of an E3 ubiquitin-protein ligase complex which mediates the ubiquitination and subsequent proteasomal degradation of target proteins. May have a role in synapse differentiation and growth. This chain is Kelch-like protein diablo, found in Aedes aegypti (Yellowfever mosquito).